A 76-amino-acid polypeptide reads, in one-letter code: Alpha/kappa-conotoxin-like pl14.3 (76 aa).

The signal sequence occupies residues 1 to 27; the sequence is MPSVRSVACCCLLWMMLSVQLVTPGSP. A propeptide spanning residues 28–39 is cleaved from the precursor; the sequence is ATAQLSGQRTAR. 2 disulfide bridges follow: Cys-46/Cys-61 and Cys-50/Cys-63. An Aspartic acid 1-amide modification is found at Asp-64. A propeptide spanning residues 65 to 76 is cleaved from the precursor; that stretch reads GKRDVVSSSMAV.

Belongs to the conotoxin J superfamily. In terms of tissue distribution, expressed by the venom duct.

The protein localises to the secreted. Functionally, highly inhibits both nicotinic acetylcholine receptors (neuronal (alpha-3/beta-4) and muscular (alpha-1/beta-1/epsilon/delta) subtypes) and the voltage-gated potassium channel Kv1.6/KCNA6 subtype. In Conus planorbis (Planorbis cone), this protein is Alpha/kappa-conotoxin-like pl14.3.